Consider the following 55-residue polypeptide: DNA-directed RNA polymerase subunit Rpo10 (55 aa).

4 residues coordinate Zn(2+): Cys6, Cys9, Cys43, and Cys44.

The protein belongs to the archaeal Rpo10/eukaryotic RPB10 RNA polymerase subunit family. As to quaternary structure, part of the RNA polymerase complex. Zn(2+) serves as cofactor.

The protein localises to the cytoplasm. It catalyses the reaction RNA(n) + a ribonucleoside 5'-triphosphate = RNA(n+1) + diphosphate. DNA-dependent RNA polymerase (RNAP) catalyzes the transcription of DNA into RNA using the four ribonucleoside triphosphates as substrates. This Methanothermobacter thermautotrophicus (strain ATCC 29096 / DSM 1053 / JCM 10044 / NBRC 100330 / Delta H) (Methanobacterium thermoautotrophicum) protein is DNA-directed RNA polymerase subunit Rpo10.